The chain runs to 1159 residues: MEADWDELSRIPVPPPSPHALPTVATTIAFDDVMELLWVGNEYGRITSFYGPELQRYTSVRAHPVAEGIVRQILFHERGVISLSSRSVHMITRRGLTQWHVAHEEMVDLRCMSFTAQLNRVIVAGCQKVMFTIDIDKGVIVDKLPTEYNYTMMKKSRYLCAATDTGSVNALSLSDFRVVKSWKAHGTAVNDMDARNDLLVTCGFSVRHLGSPIVDPLANVYDLKTLSPLPPIPFHAGAAYVRMHPKLSTTSFVASQTGQLQVVDLMNPNSINLRQANVSFMLGIDISPSGEALAINDAECMVHLWGSPAKIHFNEMSKEVELADVTHRPPPLDWSPDTPLNMIGMPYYHERLFSAWPSHLVFEVGSPPAPIDTGLIPYLRPAEIGHCAPNPKKTRRYQVENTRAVATTEPALIAPKFLSEKAREQSKKSDGSVAEAAGALAGAKLNGEAEDDPLLKYSNVEIKYSRFGVDDFDFRFYNQTNFSGLETHIANSFTNALLQLLKFIPLVRNVALHHAASSCVFENCLLCEMGYLFDMLEKANGQNCQATNLLKTFSSFREAASLGILEENLTNKSLSSAIQAVNRFFLGQIAHDFRTIMPNSDDLEQRLATIASESIQCRYCGNEIVRPGNSLVNELIYPNMDIKHTRRNPAFRFSNILRASIERETQNKGWCNYCRRYQPVGIRKSVHRMPLVMMLNAALNTPMARRLWAIPGWLPDEVGIVIDGGQTLCYEGEDLRMRVQANMPGLIVYELVGVVTEIDIPEHQKPHLVSFINVAISSPEPQPQNKWHLFNDFLVTEVDKDEALRFNQPWKVPCVLAFQVKDARHAMDDSWKDALDTTLLFRDWSLNGGRPVESRVTLSEDEKPTPGTPMALDTEFVDLEKAEIDVKADGSQEIVRPSKSGLARVSVLRGSGVREGVPFIDDYITIKEPIVDYVTQYSGIKPGDLDPRTSEHNLVPLKVAYKKLWLLLNLGCVFVGHGLASDFRKINIQVPKSQTVDTQYLFFHPGKSRRLSLRYLAWAVFKEYIQEEPADNNEGHDSIEDARMALRLWKKFLEYEDAGIVSQMLEEIFREGSKLGFRPPPRNGTAAVLSRPGTAVTMQNTNSGRNTPTVPDAAGAPAVPASAPTTPGRGFRRADALTPGDGTFSGPGAGDFFGGSPLK.

The WD repeat unit spans residues 276–315; that stretch reads ANVSFMLGIDISPSGEALAINDAECMVHLWGSPAKIHFNE. A linker region spans residues 316-451; that stretch reads MSKEVELADV…GAKLNGEAED (136 aa). One can recognise a USP domain in the interval 452–821; sequence DPLLKYSNVE…VPCVLAFQVK (370 aa). In terms of domain architecture, Exonuclease spans 872–1048; that stretch reads LDTEFVDLEK…IEDARMALRL (177 aa). A divalent metal cation contacts are provided by Asp873, Glu875, Asp982, and Asp1041. Residues 1094 to 1159 form a disordered region; sequence TAVTMQNTNS…GDFFGGSPLK (66 aa). The segment covering 1096 to 1106 has biased composition (polar residues); that stretch reads VTMQNTNSGRN. Over residues 1107-1128 the composition is skewed to low complexity; the sequence is TPTVPDAAGAPAVPASAPTTPG. A compositionally biased stretch (gly residues) spans 1143–1153; it reads TFSGPGAGDFF.

This sequence belongs to the peptidase C19 family. PAN2 subfamily. As to quaternary structure, forms a heterotrimer with an asymmetric homodimer of the regulatory subunit pan3 to form the poly(A)-nuclease (PAN) deadenylation complex. It depends on a divalent metal cation as a cofactor.

Its subcellular location is the cytoplasm. The catalysed reaction is Exonucleolytic cleavage of poly(A) to 5'-AMP.. Its activity is regulated as follows. Positively regulated by the regulatory subunit pan3. Catalytic subunit of the poly(A)-nuclease (PAN) deadenylation complex, one of two cytoplasmic mRNA deadenylases involved in mRNA turnover. PAN specifically shortens poly(A) tails of RNA and the activity is stimulated by poly(A)-binding protein pab1. PAN deadenylation is followed by rapid degradation of the shortened mRNA tails by the CCR4-NOT complex. Deadenylated mRNAs are then degraded by two alternative mechanisms, namely exosome-mediated 3'-5' exonucleolytic degradation, or deadenylation-dependent mRNA decaping and subsequent 5'-3' exonucleolytic degradation by xrn1. May also be involved in post-transcriptional maturation of mRNA poly(A) tails. The polypeptide is PAN2-PAN3 deadenylation complex catalytic subunit pan2 (Aspergillus terreus (strain NIH 2624 / FGSC A1156)).